The primary structure comprises 94 residues: Pyrimidine/purine nucleoside phosphorylase (94 aa).

It belongs to the nucleoside phosphorylase PpnP family.

The enzyme catalyses a purine D-ribonucleoside + phosphate = a purine nucleobase + alpha-D-ribose 1-phosphate. It catalyses the reaction adenosine + phosphate = alpha-D-ribose 1-phosphate + adenine. It carries out the reaction cytidine + phosphate = cytosine + alpha-D-ribose 1-phosphate. The catalysed reaction is guanosine + phosphate = alpha-D-ribose 1-phosphate + guanine. The enzyme catalyses inosine + phosphate = alpha-D-ribose 1-phosphate + hypoxanthine. It catalyses the reaction thymidine + phosphate = 2-deoxy-alpha-D-ribose 1-phosphate + thymine. It carries out the reaction uridine + phosphate = alpha-D-ribose 1-phosphate + uracil. The catalysed reaction is xanthosine + phosphate = alpha-D-ribose 1-phosphate + xanthine. Functionally, catalyzes the phosphorolysis of diverse nucleosides, yielding D-ribose 1-phosphate and the respective free bases. Can use uridine, adenosine, guanosine, cytidine, thymidine, inosine and xanthosine as substrates. Also catalyzes the reverse reactions. The chain is Pyrimidine/purine nucleoside phosphorylase from Pseudomonas putida (strain W619).